A 576-amino-acid chain; its full sequence is G protein-coupled receptor kinase 6 (576 aa).

Residues 1–185 form an N-terminal region; sequence MELENIVANT…LERQPVTKNT (185 aa). In terms of domain architecture, RGS spans 53 to 171; the sequence is YHSLCERQPI…LDSIYFNRFL (119 aa). Residues 186–448 enclose the Protein kinase domain; sequence FRQYRVLGKG…AREVKEHPLF (263 aa). ATP is bound by residues 192–200, Lys-215, and 264–270; these read LGKGGFGEV and TLMNGGD. Asp-311 acts as the Proton acceptor in catalysis. 315–318 lines the ATP pocket; that stretch reads ENIL. The region spanning 449–514 is the AGC-kinase C-terminal domain; sequence KKLNFKRLGA…GSVSIPWQNE (66 aa). Residue Ser-484 is modified to Phosphoserine; by autocatalysis. Thr-485 is modified (phosphothreonine; by autocatalysis). Residues Cys-561, Cys-562, and Cys-565 are each lipidated (S-palmitoyl cysteine). Residues Ser-566 and Ser-568 each carry the phosphoserine modification.

Belongs to the protein kinase superfamily. AGC Ser/Thr protein kinase family. GPRK subfamily. As to quaternary structure, interacts with GIT1. In terms of tissue distribution, widely expressed. Detectable in all brain areas examined.

It localises to the membrane. The enzyme catalyses [G-protein-coupled receptor] + ATP = [G-protein-coupled receptor]-phosphate + ADP + H(+). Specifically phosphorylates the activated forms of G protein-coupled receptors. Such receptor phosphorylation initiates beta-arrestin-mediated receptor desensitization, internalization, and signaling events leading to their desensitization. Seems to be involved in the desensitization of D2-like dopamine receptors in striatum and chemokine receptor CXCR4 which is critical for CXCL12-induced cell chemotaxis. Phosphorylates rhodopsin (RHO) (in vitro) and a non G-protein-coupled receptor: LRP6 during Wnt signaling (in vitro). The polypeptide is G protein-coupled receptor kinase 6 (Grk6) (Rattus norvegicus (Rat)).